The chain runs to 695 residues: Translation initiation factor IF-2 (695 aa).

The tract at residues 60–92 (KKSASSKKKTEKEVEEEEIETPKKKKKQEEKIP) is disordered. The tr-type G domain maps to 184-358 (QRPPVVTVMG…EMSEIKCIPT (175 aa)). The G1 stretch occupies residues 193–200 (GHVDHGKT). A GTP-binding site is contributed by 193-200 (GHVDHGKT). A G2 region spans residues 218–222 (GITQS). Residues 239–242 (DTPG) are G3. GTP is bound by residues 239 to 243 (DTPGH) and 293 to 296 (NKID). Residues 293–296 (NKID) are G4. The G5 stretch occupies residues 330-332 (SAK).

Belongs to the TRAFAC class translation factor GTPase superfamily. Classic translation factor GTPase family. IF-2 subfamily.

It is found in the cytoplasm. Functionally, one of the essential components for the initiation of protein synthesis. Protects formylmethionyl-tRNA from spontaneous hydrolysis and promotes its binding to the 30S ribosomal subunits. Also involved in the hydrolysis of GTP during the formation of the 70S ribosomal complex. This is Translation initiation factor IF-2 from Kosmotoga olearia (strain ATCC BAA-1733 / DSM 21960 / TBF 19.5.1).